A 180-amino-acid polypeptide reads, in one-letter code: Large ribosomal subunit protein uL6 (180 aa).

The protein belongs to the universal ribosomal protein uL6 family. As to quaternary structure, part of the 50S ribosomal subunit.

This protein binds to the 23S rRNA, and is important in its secondary structure. It is located near the subunit interface in the base of the L7/L12 stalk, and near the tRNA binding site of the peptidyltransferase center. This chain is Large ribosomal subunit protein uL6, found in Anaeromyxobacter dehalogenans (strain 2CP-1 / ATCC BAA-258).